Consider the following 234-residue polypeptide: 3-dehydroquinate dehydratase (234 aa).

3-dehydroquinate is bound by residues 33-35 and R68; that span reads EWR. The Proton donor/acceptor role is filled by H124. K151 (schiff-base intermediate with substrate) is an active-site residue. Residues R193, S214, and Q218 each coordinate 3-dehydroquinate.

The protein belongs to the type-I 3-dehydroquinase family. Homodimer.

It catalyses the reaction 3-dehydroquinate = 3-dehydroshikimate + H2O. It participates in metabolic intermediate biosynthesis; chorismate biosynthesis; chorismate from D-erythrose 4-phosphate and phosphoenolpyruvate: step 3/7. Its function is as follows. Involved in the third step of the chorismate pathway, which leads to the biosynthesis of aromatic amino acids. Catalyzes the cis-dehydration of 3-dehydroquinate (DHQ) and introduces the first double bond of the aromatic ring to yield 3-dehydroshikimate. The polypeptide is 3-dehydroquinate dehydratase (Syntrophobacter fumaroxidans (strain DSM 10017 / MPOB)).